Here is a 729-residue protein sequence, read N- to C-terminus: Fatty acid oxidation complex subunit alpha (729 aa).

The tract at residues 1–189 (MLYKGDTLYL…KIGLVDGVVK (189 aa)) is enoyl-CoA hydratase/isomerase. D296 serves as a coordination point for substrate. The tract at residues 311 to 729 (ETPKQAAVLG…ARPVGDLKTA (419 aa)) is 3-hydroxyacyl-CoA dehydrogenase. NAD(+) contacts are provided by residues M324, D343, 400–402 (VVE), K407, and S429. H450 acts as the For 3-hydroxyacyl-CoA dehydrogenase activity in catalysis. Position 453 (N453) interacts with NAD(+). Substrate contacts are provided by N500 and Y660. The disordered stretch occupies residues 707-729 (ARHNEPYYPPVEPARPVGDLKTA).

It in the N-terminal section; belongs to the enoyl-CoA hydratase/isomerase family. In the C-terminal section; belongs to the 3-hydroxyacyl-CoA dehydrogenase family. In terms of assembly, heterotetramer of two alpha chains (FadB) and two beta chains (FadA).

It carries out the reaction a (3S)-3-hydroxyacyl-CoA + NAD(+) = a 3-oxoacyl-CoA + NADH + H(+). The enzyme catalyses a (3S)-3-hydroxyacyl-CoA = a (2E)-enoyl-CoA + H2O. It catalyses the reaction a 4-saturated-(3S)-3-hydroxyacyl-CoA = a (3E)-enoyl-CoA + H2O. The catalysed reaction is (3S)-3-hydroxybutanoyl-CoA = (3R)-3-hydroxybutanoyl-CoA. It carries out the reaction a (3Z)-enoyl-CoA = a 4-saturated (2E)-enoyl-CoA. The enzyme catalyses a (3E)-enoyl-CoA = a 4-saturated (2E)-enoyl-CoA. Its pathway is lipid metabolism; fatty acid beta-oxidation. Functionally, involved in the aerobic and anaerobic degradation of long-chain fatty acids via beta-oxidation cycle. Catalyzes the formation of 3-oxoacyl-CoA from enoyl-CoA via L-3-hydroxyacyl-CoA. It can also use D-3-hydroxyacyl-CoA and cis-3-enoyl-CoA as substrate. The chain is Fatty acid oxidation complex subunit alpha from Escherichia coli O6:K15:H31 (strain 536 / UPEC).